Here is a 718-residue protein sequence, read N- to C-terminus: Sodium/myo-inositol cotransporter (718 aa).

Topologically, residues 1–9 are extracellular; the sequence is MRAVLDTAD. The helical transmembrane segment at 10–29 threads the bilayer; that stretch reads IAIVALYFILVMCIGFFAMW. Residues 30 to 38 lie on the Cytoplasmic side of the membrane; that stretch reads KSNRSTVSG. The chain crosses the membrane as a helical span at residues 39 to 57; it reads YFLAGRSMTWVAIGASLFV. The Extracellular segment spans residues 58–86; the sequence is SNIGSEHFIGLAGSGAASGFAVGAWEFNA. The chain crosses the membrane as a helical span at residues 87–110; that stretch reads LLLLQLLGWVFIPIYIRSGVYTMP. The Cytoplasmic portion of the chain corresponds to 111-123; sequence EYLSKRFGGHRIQ. Residues 124–144 traverse the membrane as a helical segment; sequence VYFAALSLILYIFTKLSVDLY. The Extracellular segment spans residues 145-157; the sequence is SGALFIQESLGWN. Residues 158–183 form a helical membrane-spanning segment; it reads LYVSVILLIGMTALLTVTGGLVAVIY. Residues 184–186 are Cytoplasmic-facing; that stretch reads TDT. A helical transmembrane segment spans residues 187-205; that stretch reads LQALLMIIGALTLMIISIM. Over 206-303 the chain is Extracellular; it reads EIGGFEEVKR…HAKGSTLMAG (98 aa). An N-linked (GlcNAc...) asparagine glycan is attached at asparagine 232. A helical membrane pass occupies residues 304-324; that stretch reads FLKLLPMFIIVVPGMISRILF. Residues 325–353 lie on the Cytoplasmic side of the membrane; that stretch reads TDDIACINPEHCMLVCGSRAGCSNIAYPR. A helical membrane pass occupies residues 354–376; it reads LVMKLVPVGLRGLMMAVMIAALM. Residues 377-406 are Extracellular-facing; sequence SDLDSIFNSASTIFTLDVYKLIRKSASSRE. The helical transmembrane segment at 407–430 threads the bilayer; it reads LMIVGRIFVAFMVVISIAWVPIIV. Topologically, residues 431 to 443 are cytoplasmic; that stretch reads EMQGGQMYLYIQE. Residues 444–462 form a helical membrane-spanning segment; sequence VADYLTPPVAALFLLAIFW. The Extracellular segment spans residues 463-510; the sequence is KRCNEQGAFYGGMAGFVLGAVRLILAFAYRAPECDQPDNRPGFIKDIH. A helical transmembrane segment spans residues 511-532; it reads YMYVATGLFWVTGLITVIVSLL. Over 533-695 the chain is Cytoplasmic; that stretch reads TPPPTKEQIR…QMLEETRQVK (163 aa). Residues serine 594 and serine 632 each carry the phosphoserine modification. Residues 696–716 traverse the membrane as a helical segment; it reads VILNIGLFAVCSLGIFMFVYF. Residues 717 to 718 are Extracellular-facing; the sequence is SL.

Belongs to the sodium:solute symporter (SSF) (TC 2.A.21) family. In terms of assembly, interacts with KCNQ2 (via the pore module). Interacts with KCNQ1; this interaction is direct. Forms coregulatory complexes with ion channels KCNQ2-KCNQ3 and KCNQ1-KCNE2.

It is found in the apical cell membrane. The protein resides in the basolateral cell membrane. The catalysed reaction is myo-inositol(out) + 2 Na(+)(out) = myo-inositol(in) + 2 Na(+)(in). It catalyses the reaction scyllo-inositol(out) + 2 Na(+)(out) = scyllo-inositol(in) + 2 Na(+)(in). In terms of biological role, electrogenic Na(+)-coupled sugar symporter that actively transports myo-inositol and its stereoisomer scyllo-inositol across the plasma membrane, with a Na(+) to sugar coupling ratio of 2:1. Maintains myo-inositol concentration gradient that defines cell volume and fluid balance during osmotic stress, in particular in the fetoplacental unit and central nervous system. Forms coregulatory complexes with voltage-gated K(+) ion channels, allosterically altering ion selectivity, voltage dependence and gating kinetics of the channel. In turn, K(+) efflux through the channel forms a local electrical gradient that modulates electrogenic Na(+)-coupled myo-inositol influx through the transporter. Associates with KCNQ1-KCNE2 channel in the apical membrane of choroid plexus epithelium and regulates the myo-inositol gradient between blood and cerebrospinal fluid with an impact on neuron excitability. Associates with KCNQ2-KCNQ3 channel altering ion selectivity, increasing Na(+) and Cs(+) permeation relative to K(+) permeation. Provides myo-inositol precursor for biosynthesis of phosphoinositides such as PI(4,5)P2, thus indirectly affecting the activity of phosphoinositide-dependent ion channels and Ca(2+) signaling upon osmotic stress. The chain is Sodium/myo-inositol cotransporter from Homo sapiens (Human).